A 142-amino-acid chain; its full sequence is Putative regulator of rDNA transcription protein 16 (142 aa).

3 helical membrane passes run 19–39 (ILLT…VMVA), 84–104 (FLLF…AIFL), and 111–131 (SIFI…GLCH).

It localises to the membrane. Its function is as follows. Identified in a screen for mutants with decreased levels of rDNA transcription. This is Putative regulator of rDNA transcription protein 16 (RRT16) from Saccharomyces cerevisiae (strain ATCC 204508 / S288c) (Baker's yeast).